The primary structure comprises 594 residues: Jacalin-related lectin 44 (594 aa).

The tract at residues 1–23 (MIQKLGAKGIKSDERNQREWDDG) is disordered. Jacalin-type lectin domains follow at residues 2–148 (IQKL…YFIS), 151–293 (PTRL…YFST), 296–441 (PNKL…YYRP), and 448–588 (VKRL…HVIP). Positions 10-23 (IKSDERNQREWDDG) are enriched in basic and acidic residues.

This sequence belongs to the jacalin lectin family.

The chain is Jacalin-related lectin 44 (JAL44) from Arabidopsis thaliana (Mouse-ear cress).